A 183-amino-acid chain; its full sequence is uncharacterized protein (183 aa).

Residues 153 to 175 (LLYVFIRLFAGCLKVFRLCILWL) form a helical membrane-spanning segment.

The protein resides in the membrane. This is an uncharacterized protein from Saccharomyces cerevisiae (strain ATCC 204508 / S288c) (Baker's yeast).